Consider the following 390-residue polypeptide: Chitinase-3-like protein 2 (390 aa).

A signal peptide spans 1-26 (MGATTMDQKSLWAGVVVLLLLQGGSA). The GH18 domain maps to 27 to 390 (YKLVCYFTNW…QAVKRSLGSL (364 aa)). Cysteine 31 and cysteine 56 are oxidised to a cystine. A glycan (N-linked (GlcNAc...) asparagine) is linked at asparagine 35. Chitin is bound by residues 75–76 (DK), 102–105 (GGYL), tyrosine 104, tyrosine 146, 210–213 (LSFD), aspartate 213, and tryptophan 360.

Belongs to the glycosyl hydrolase 18 family. As to expression, highest expression in chondrocytes, followed by synoviocytes, lung and heart. Not detected in spleen, pancreas, and liver. May also be expressed in developing brain and placenta.

Its subcellular location is the secreted. Functionally, lectin that binds chitooligosaccharides and other glycans with high affinity, but not heparin. Has no chitinase activity. The polypeptide is Chitinase-3-like protein 2 (CHI3L2) (Homo sapiens (Human)).